We begin with the raw amino-acid sequence, 287 residues long: Inhibitory synaptic factor 1 (287 aa).

The disordered stretch occupies residues 1–22 (MSQSRAPAREPSETPSQREQIR). Residues 25–58 (MKMVIQQLEGILKELKDVAHELREVVGQIDKLTS) are a coiled coil. Disordered stretches follow at residues 113-174 (RRSA…GTRE) and 189-287 (CDDD…NKDL). Residues 153-167 (EEASSSTHSQSQKTS) are compositionally biased toward low complexity. A compositionally biased stretch (acidic residues) spans 189–209 (CDDDEDEDEDEDGRDEEEDKL). The segment covering 259 to 274 (RNSSTQTVSDKSTQTL) has biased composition (polar residues).

Belongs to the INSYN1 family.

The protein localises to the postsynaptic density. In terms of biological role, may be a component of the protein machinery at the inhibitory synapses, probably acting as a scaffold. The chain is Inhibitory synaptic factor 1 from Danio rerio (Zebrafish).